A 248-amino-acid chain; its full sequence is Tetraspanin-17 (248 aa).

Over 1 to 7 (MSEVRTG) the chain is Cytoplasmic. Residues 8-28 (FLTMTTIILISIGLTMMGTGL) form a helical membrane-spanning segment. Over 29 to 44 (YQKTTMSSCIRETSSQ) the chain is Extracellular. The helical transmembrane segment at 45–65 (FTLLGLLLLLIPQIGLYGICC) threads the bilayer. Residues 66–69 (RSKR) are Cytoplasmic-facing. Residues 70 to 90 (LFNFFFYGMVVLIIIVSYYSI) form a helical membrane-spanning segment. At 91 to 210 (KCSIYNTTFG…ILKAIVHQWK (120 aa)) the chain is on the extracellular side. Asn-96, Asn-109, and Asn-141 each carry an N-linked (GlcNAc...) asparagine glycan. A helical membrane pass occupies residues 211 to 231 (YLSMFAYPALVLSCISLAIAW). Over 232 to 248 (SLKETIHENEDYRGSYS) the chain is Cytoplasmic.

It belongs to the tetraspanin (TM4SF) family.

It localises to the membrane. Its function is as follows. May be involved in the regulation of cell differentiation. This Arabidopsis thaliana (Mouse-ear cress) protein is Tetraspanin-17 (TET17).